A 131-amino-acid polypeptide reads, in one-letter code: Translation initiation factor 5A (131 aa).

Position 37 is a hypusine (lysine 37).

It belongs to the eIF-5A family.

It is found in the cytoplasm. Its function is as follows. Functions by promoting the formation of the first peptide bond. This chain is Translation initiation factor 5A (eIF5A), found in Methanococcus aeolicus (strain ATCC BAA-1280 / DSM 17508 / OCM 812 / Nankai-3).